Reading from the N-terminus, the 466-residue chain is Asparagine--tRNA ligase (466 aa).

The protein belongs to the class-II aminoacyl-tRNA synthetase family. Homodimer.

It is found in the cytoplasm. The enzyme catalyses tRNA(Asn) + L-asparagine + ATP = L-asparaginyl-tRNA(Asn) + AMP + diphosphate + H(+). In Shewanella frigidimarina (strain NCIMB 400), this protein is Asparagine--tRNA ligase.